The following is a 507-amino-acid chain: ATP synthase subunit alpha, chloroplastic (507 aa).

An ATP-binding site is contributed by 170-177 (GDRQTGKT).

Belongs to the ATPase alpha/beta chains family. F-type ATPases have 2 components, CF(1) - the catalytic core - and CF(0) - the membrane proton channel. CF(1) has five subunits: alpha(3), beta(3), gamma(1), delta(1), epsilon(1). CF(0) has four main subunits: a, b, b' and c.

It localises to the plastid. The protein localises to the chloroplast thylakoid membrane. It carries out the reaction ATP + H2O + 4 H(+)(in) = ADP + phosphate + 5 H(+)(out). Functionally, produces ATP from ADP in the presence of a proton gradient across the membrane. The alpha chain is a regulatory subunit. In Vitis vinifera (Grape), this protein is ATP synthase subunit alpha, chloroplastic.